Reading from the N-terminus, the 36-residue chain is Egg-laying-like hormone (36 aa).

Residue Lys36 is modified to Lysine amide.

As to expression, supra, subesophageal ganglia and segmental ganglia of the ventral nerve cord and brain.

Functionally, may be involved in leech reproduction. In Theromyzon tessulatum (Duck leech), this protein is Egg-laying-like hormone.